A 459-amino-acid chain; its full sequence is Acetyltransferase pigO (459 aa).

The protein belongs to the trichothecene O-acetyltransferase family.

Its pathway is secondary metabolite biosynthesis. In terms of biological role, acetyltransferase; part of the gene cluster that mediates the biosynthesis of azaphilone pigments (MonAzPs), a complex mixture of compounds with a common azaphilone skeleton very widely used as food colorants. PigM and pigO are involved in the elimination of the omega-1 alcohol with pigM acting as an O-acetyltransferase that synthesizes the O-11 acetyl intermediate whereas pigO eliminates acetic acid to yield an intermediate with a C10(11) double bond. The first step of the pathway is performed by the nrPKS pigA that forms the hexaketide precursor from successive condensations of five malonyl-CoA units, with a simple acetyl-CoA starter unit. The role of esterase pigG is not clear, but it may play at most a supplementary role in the formation of the benzaldehyde produced by the pigA nrPKS. This very reactive benzaldehyde is intercepted by the pigC ketoreductase that to provide the first stable enzyme-free MonAzPs intermediate, 6-(4-hydroxy-2-oxopentyl)-3-methyl-2,4-dioxocyclohexane carbaldehyde, also known as M7PKS-1. The FAD-dependent monooxygenase pigN hydroxylates M7PKS-1 at C-4, which triggers the formation of the pyran ring. PigJ, pigK and pigD are involved in the acetylation of the pyran ring. PigJ and pigK form the two subunits of a dedicated fungal FAS that produces the side chain fatty acyl moiety of MonAzPs and pigD transfers the fatty acyl chain to the C-4 alcohol. PigM and pigO are involved in the elimination of the omega-1 alcohol. PigM acts as an O-acetyltransferase that synthesizes the putative O-11 acetyl intermediate whereas pigO eliminates acetic acid to yield an intermediate with a C10(11) double bond. The dehydration of the C-11 alcohol followed by the reduction of the C6(7) double bond by the NAD(P)H-dependent oxidoreductase pigE increases the electrophilicity of the C-5 ketone of the resulting acyl benzopyran. This in turn sets up the C-5 ketone for an intramolecular Knoevenagel aldol condensation with the C-20 enol of the side chain. This condensation affords the characteristic linear tricyclic carbon skeletons of the yellow pigments that serve as the common precursors for the classical yellow pigments monascin and ankaflavin, orange pigments rubopunctatin and monascorubrin, and red pigments ribropunctamine and monascorubramine. The FAD-dependent oxidoreductase pigF is especially invoved in the biosynthesis of orange and red pigments via desaturation of C6(7). The polypeptide is Acetyltransferase pigO (Monascus ruber (Mold)).